Here is a 409-residue protein sequence, read N- to C-terminus: MRGIIEDLSQDGLGVINGIEVPFCYPGDEVRITRTRDRFGRKMASEFSLITPSPLRQRPRCRHYGKCGGCLWQGMKYEEQLKFKKELFRRITGIEAEILGSPRIWEFRNISNFIVSVNGIGLKEFARPKTVVDLKECPVFSNRTPLYIRAMKEFLRESGLKPWNWKEGDVHYLQVREGKFTGEVMVNIIAHRPPEETILEYFPFADSVYWSIKRDKRDDPSGEPIHLGEKEFISEKIFGIKYLLRPGIFFQTNSYALPLLLKAVEGFLDGSKVLDLYSGIGTFSLYLTKKGFNVVGVEINKTAVEVAKLSAELNSLNVEFKAKRAEEENIEGYDALILDPPRKGLGEFAGVVEKKGPENVVYVSCNPKRFILDFKNYLSRSYKVEDAILIDMFPHTPHVEAVIKLRKYS.

[4Fe-4S] cluster contacts are provided by Cys61, Cys67, Cys70, and Cys137. S-adenosyl-L-methionine contacts are provided by Gln251, Tyr277, Glu298, and Asp339. Cys365 (nucleophile) is an active-site residue.

Belongs to the class I-like SAM-binding methyltransferase superfamily. RNA M5U methyltransferase family.

It catalyses the reaction uridine(747) in 23S rRNA + S-adenosyl-L-methionine = 5-methyluridine(747) in 23S rRNA + S-adenosyl-L-homocysteine + H(+). Functionally, catalyzes the formation of 5-methyl-uridine at position equivalent to 747 (m5U747) in 23S rRNA. In Pyrococcus furiosus (strain ATCC 43587 / DSM 3638 / JCM 8422 / Vc1), this protein is 23S rRNA (uracil(747)-C(5))-methyltransferase.